A 527-amino-acid polypeptide reads, in one-letter code: Glutamate--cysteine ligase (527 aa).

Belongs to the glutamate--cysteine ligase type 1 family. Type 1 subfamily.

It carries out the reaction L-cysteine + L-glutamate + ATP = gamma-L-glutamyl-L-cysteine + ADP + phosphate + H(+). It functions in the pathway sulfur metabolism; glutathione biosynthesis; glutathione from L-cysteine and L-glutamate: step 1/2. The protein is Glutamate--cysteine ligase of Pseudomonas paraeruginosa (strain DSM 24068 / PA7) (Pseudomonas aeruginosa (strain PA7)).